We begin with the raw amino-acid sequence, 262 residues long: Pimeloyl-[acyl-carrier protein] methyl ester esterase (262 aa).

Residues 15–242 (HLVLLHGWGL…AAHAPFISHP (228 aa)) form the AB hydrolase-1 domain. Residues Trp-22, 82–83 (SL), and 143–147 (FLALQ) contribute to the substrate site. Ser-82 functions as the Nucleophile in the catalytic mechanism. Residues Asp-207 and His-235 contribute to the active site. His-235 is a binding site for substrate.

Belongs to the AB hydrolase superfamily. Carboxylesterase BioH family. As to quaternary structure, monomer.

It localises to the cytoplasm. The enzyme catalyses 6-carboxyhexanoyl-[ACP] methyl ester + H2O = 6-carboxyhexanoyl-[ACP] + methanol + H(+). It participates in cofactor biosynthesis; biotin biosynthesis. The physiological role of BioH is to remove the methyl group introduced by BioC when the pimeloyl moiety is complete. It allows to synthesize pimeloyl-ACP via the fatty acid synthetic pathway through the hydrolysis of the ester bonds of pimeloyl-ACP esters. This chain is Pimeloyl-[acyl-carrier protein] methyl ester esterase, found in Shigella flexneri.